A 1073-amino-acid chain; its full sequence is Activated Cdc42 kinase Ack (1073 aa).

The tract at residues 88 to 110 (IGGGKQPSSKKQSSAARESSQGN) is disordered. Residues 123–383 (ITMGLKLGDG…PTFAALKEYL (261 aa)) form the Protein kinase domain. ATP is bound by residues 129–137 (LGDGSFGVV) and K156. The active-site Proton acceptor is the D250. Residues 386-446 (MSPPVMRASR…PRNLLEQRKV (61 aa)) form the SH3 domain. Disordered regions lie at residues 484 to 506 (QRKC…SSKQ), 803 to 834 (PLKN…VEAA), and 862 to 882 (AQPP…HQQQ). Residues 812–826 (SVHSNHSSPSSTASP) show a composition bias toward low complexity. In terms of domain architecture, UBA spans 1029 to 1072 (GLATRHYKIDQLARLGVAGRPQCEQALQQTNWSLEVAAELLLNA).

Belongs to the protein kinase superfamily. Tyr protein kinase family. In terms of assembly, interacts with yki and ex. Interacts with drk. Likely to be a member of an axonal guidance receptor complex that includes SH3PX1, dock and Dscam. Interacts (via N-terminus) with dock. Interacts with SH3PX1 (via SH3 domain). The cofactor is Mg(2+). Post-translationally, phosphorylated. Autophosphorylated. In terms of tissue distribution, detected in ovaries (at protein level). In adults, relatively higher expression in the head compared to the body.

It localises to the cytoplasm. It is found in the cytoplasmic vesicle. The protein resides in the clathrin-coated vesicle. The enzyme catalyses L-tyrosyl-[protein] + ATP = O-phospho-L-tyrosyl-[protein] + ADP + H(+). It carries out the reaction L-threonyl-[protein] + ATP = O-phospho-L-threonyl-[protein] + ADP + H(+). In terms of biological role, non-receptor tyrosine-protein and serine/threonine-protein kinase that is implicated in diverse biological functions such as cell survival, cell differentiation, cell growth and proliferation. Phosphorylates SH3PX1 and ex. Phosphorylates SH3PX1 predominantly on 'Tyr-56', which likely promotes the recruitment of SH3PX1 to an axonal guidance receptor complex that includes dock and Dscam; because phosphorylation of SH3PX1 increases its interaction with the complex member dock while decreasing its interaction with the actin cytoskeleton modulator WASp. In the wing and eye, promotes tissue growth, and during embryogenesis coordinates cell shape changes required for correct dorsal closure. Functions in the negative regulation of the Hippo/SWH (Sav/Wts/Hpo) signaling pathway by enhancing yki activity thereby promoting cell proliferation and inhibiting apoptosis. This is accomplished, at least in part, by phosphorylating ex thereby reducing its ability to efficiently activate the Hippo signaling cascade. In the eye disk, wing disk and possibly spermatids, inhibits programmed cell death induced by hid and rpr through a mechanism that is independent of the MAP kinase signal transduction pathway. Essential for male and female fertility. During oogenesis required for the correct temporal assembly, and consequently the catalytic activity of long Ctps filaments (cytoophidium) in the germline nurse cells, likely by phosphorylating an unidentified substrate that is essential for linking individual Ctps filaments into large, catalytically active assemblies. The protein is Activated Cdc42 kinase Ack of Drosophila melanogaster (Fruit fly).